A 537-amino-acid chain; its full sequence is Glutamyl-tRNA reductase, chloroplastic (537 aa).

The N-terminal 48 residues, Met1 to Arg48, are a transit peptide targeting the chloroplast. Residues Thr134 to Arg137, Ser194, Glu199 to Gln201, and Gln205 each bind substrate. Cys135 serves as the catalytic Nucleophile. Gly276 to Gly281 contributes to the NADP(+) binding site.

The protein belongs to the glutamyl-tRNA reductase family.

It is found in the plastid. The protein localises to the chloroplast. It carries out the reaction (S)-4-amino-5-oxopentanoate + tRNA(Glu) + NADP(+) = L-glutamyl-tRNA(Glu) + NADPH + H(+). It participates in porphyrin-containing compound metabolism; protoporphyrin-IX biosynthesis; 5-aminolevulinate from L-glutamyl-tRNA(Glu): step 1/2. Functionally, catalyzes the NADPH-dependent reduction of glutamyl-tRNA(Glu) to glutamate 1-semialdehyde (GSA). The polypeptide is Glutamyl-tRNA reductase, chloroplastic (Oryza sativa subsp. japonica (Rice)).